Reading from the N-terminus, the 614-residue chain is Elongation factor 4 (614 aa).

The 183-residue stretch at 10–192 (ALIRNFCIIA…EIVARIPPPV (183 aa)) folds into the tr-type G domain. Residues 22-27 (DHGKST) and 139-142 (NKID) each bind GTP.

This sequence belongs to the TRAFAC class translation factor GTPase superfamily. Classic translation factor GTPase family. LepA subfamily.

The protein localises to the cell membrane. The catalysed reaction is GTP + H2O = GDP + phosphate + H(+). Functionally, required for accurate and efficient protein synthesis under certain stress conditions. May act as a fidelity factor of the translation reaction, by catalyzing a one-codon backward translocation of tRNAs on improperly translocated ribosomes. Back-translocation proceeds from a post-translocation (POST) complex to a pre-translocation (PRE) complex, thus giving elongation factor G a second chance to translocate the tRNAs correctly. Binds to ribosomes in a GTP-dependent manner. The sequence is that of Elongation factor 4 from Thermobifida fusca (strain YX).